Consider the following 418-residue polypeptide: Zinc finger protein 566 (418 aa).

The KRAB domain occupies 6-77; the sequence is VMFSDVSVDF…DRELTRGQWP (72 aa). The segment at 169–193 adopts a C2H2-type 1; degenerate zinc-finger fold; it reads KFCASKEYRKTFRHGSQFATHEIIH. 7 C2H2-type zinc fingers span residues 199–221, 227–249, 255–277, 283–305, 311–333, 339–361, and 367–389; these read YECKECGKSFRHPSRLTHHQKIH, FECKECGKTFICGSDLTRHHRIH, YECKECGKAFSSGSNFTRHQRIH, YECKECGKAFSSGSNFTQHQRIH, YECKECGNAFSQSSQLIKHQRIH, YECKECEKAFRSGSDLTRHQRIH, and YECKICGKAYSQSSQLISHHRIH. Glycyl lysine isopeptide (Lys-Gly) (interchain with G-Cter in SUMO2) cross-links involve residues Lys-314 and Lys-328.

This sequence belongs to the krueppel C2H2-type zinc-finger protein family.

It is found in the nucleus. May be involved in transcriptional regulation. The protein is Zinc finger protein 566 (ZNF566) of Homo sapiens (Human).